The primary structure comprises 287 residues: Ribosomal RNA small subunit methyltransferase A (287 aa).

Positions 18, 20, 45, 66, 91, and 118 each coordinate S-adenosyl-L-methionine.

It belongs to the class I-like SAM-binding methyltransferase superfamily. rRNA adenine N(6)-methyltransferase family. RsmA subfamily.

Its subcellular location is the cytoplasm. It catalyses the reaction adenosine(1518)/adenosine(1519) in 16S rRNA + 4 S-adenosyl-L-methionine = N(6)-dimethyladenosine(1518)/N(6)-dimethyladenosine(1519) in 16S rRNA + 4 S-adenosyl-L-homocysteine + 4 H(+). Functionally, specifically dimethylates two adjacent adenosines (A1518 and A1519) in the loop of a conserved hairpin near the 3'-end of 16S rRNA in the 30S particle. May play a critical role in biogenesis of 30S subunits. The polypeptide is Ribosomal RNA small subunit methyltransferase A (Haemophilus influenzae (strain ATCC 51907 / DSM 11121 / KW20 / Rd)).